We begin with the raw amino-acid sequence, 589 residues long: Protein FAM161B (589 aa).

Disordered stretches follow at residues 1-166, 265-297, and 386-444; these read MTVG…VCSW, KKEQQKEDAPQRDSAAVAQTKVSPKKATSRKIP, and AERR…GLAS. Residues 92-106 show a composition bias toward acidic residues; the sequence is PDSDLNDAEDEEDLE. The span at 151–166 shows a compositional bias: polar residues; sequence TSDSGPPSQHRSVCSW. A compositionally biased stretch (basic and acidic residues) spans 265–275; that stretch reads KKEQQKEDAPQ. A compositionally biased stretch (basic residues) spans 287 to 297; sequence SPKKATSRKIP. Over residues 386–396 the composition is skewed to basic and acidic residues; that stretch reads AERRETRETTR. Positions 510–577 form a coiled coil; that stretch reads EEVFKAKLKE…ALKQAGLEEE (68 aa).

Belongs to the FAM161 family. In terms of assembly, interacts with FAM161A.

This Mus musculus (Mouse) protein is Protein FAM161B (Fam161b).